Consider the following 427-residue polypeptide: Large ribosomal subunit protein uL4 (427 aa).

Position 2 is an N-acetylalanine (Ala-2). Lys-14 bears the N6-acetyllysine mark. Arg-97 bears the Omega-N-methylarginine mark. Lys-106 is subject to N6-acetyllysine. Residue Lys-239 forms a Glycyl lysine isopeptide (Lys-Gly) (interchain with G-Cter in SUMO2) linkage. Position 259 is an N6-acetyllysine (Lys-259). Thr-266 bears the Phosphothreonine mark. 2 positions are modified to phosphoserine: Ser-290 and Ser-295. Arg-300 is subject to Citrulline. Residue Lys-327 forms a Glycyl lysine isopeptide (Lys-Gly) (interchain with G-Cter in SUMO2) linkage. Residues Lys-333 and Lys-353 each carry the N6-acetyllysine modification. Lys-364 carries the N6-acetyllysine; alternate modification. Lys-364 participates in a covalent cross-link: Glycyl lysine isopeptide (Lys-Gly) (interchain with G-Cter in SUMO1); alternate. Ser-365 bears the Phosphoserine mark. The interval 369 to 427 (AAVAGKKPVVGKKGKKVAVGVKKQKKPLVGKKAAATKKPAPEKKSTEKKPTTEEKKPAA) is disordered. The segment covering 377–397 (VVGKKGKKVAVGVKKQKKPLV) has biased composition (basic residues). Basic and acidic residues predominate over residues 407–427 (PAPEKKSTEKKPTTEEKKPAA).

It belongs to the universal ribosomal protein uL4 family. In terms of assembly, component of the large ribosomal subunit. May bind IPO9 with low affinity. Interacts with RBM3. Post-translationally, citrullinated by PADI4.

The protein resides in the cytoplasm. Component of the large ribosomal subunit. The ribosome is a large ribonucleoprotein complex responsible for the synthesis of proteins in the cell. The polypeptide is Large ribosomal subunit protein uL4 (RPL4) (Macaca fascicularis (Crab-eating macaque)).